A 394-amino-acid polypeptide reads, in one-letter code: Elongation factor Tu 1 (394 aa).

The 195-residue stretch at 10–204 (KPHVNVGTIG…FLDSYIPEPE (195 aa)) folds into the tr-type G domain. The tract at residues 19-26 (GHVDHGKT) is G1. Residue 19 to 26 (GHVDHGKT) coordinates GTP. Thr26 contacts Mg(2+). Residues 60 to 64 (GITIN) form a G2 region. The interval 81–84 (DCPG) is G3. GTP contacts are provided by residues 81 to 85 (DCPGH) and 136 to 139 (NKCD). The tract at residues 136-139 (NKCD) is G4. A G5 region spans residues 174 to 176 (SAL).

This sequence belongs to the TRAFAC class translation factor GTPase superfamily. Classic translation factor GTPase family. EF-Tu/EF-1A subfamily. Monomer.

It localises to the cytoplasm. The enzyme catalyses GTP + H2O = GDP + phosphate + H(+). Its function is as follows. GTP hydrolase that promotes the GTP-dependent binding of aminoacyl-tRNA to the A-site of ribosomes during protein biosynthesis. This is Elongation factor Tu 1 from Shigella sonnei (strain Ss046).